Reading from the N-terminus, the 1061-residue chain is RecBCD enzyme subunit RecC (1061 aa).

It belongs to the RecC family. As to quaternary structure, heterotrimer of RecB, RecC and RecD. All subunits contribute to DNA-binding.

A helicase/nuclease that prepares dsDNA breaks (DSB) for recombinational DNA repair. Binds to DSBs and unwinds DNA via a highly rapid and processive ATP-dependent bidirectional helicase activity. Unwinds dsDNA until it encounters a Chi (crossover hotspot instigator) sequence from the 3' direction. Cuts ssDNA a few nucleotides 3' to the Chi site. The properties and activities of the enzyme are changed at Chi. The Chi-altered holoenzyme produces a long 3'-ssDNA overhang and facilitates RecA-binding to the ssDNA for homologous DNA recombination and repair. Holoenzyme degrades any linearized DNA that is unable to undergo homologous recombination. In the holoenzyme this subunit recognizes the wild-type Chi sequence, and when added to isolated RecB increases its ATP-dependent helicase processivity. The chain is RecBCD enzyme subunit RecC from Buchnera aphidicola subsp. Schizaphis graminum (strain Sg).